Here is a 390-residue protein sequence, read N- to C-terminus: Protein DDI1 homolog (390 aa).

Aspartate 205 is an active-site residue. The segment at 322–344 (MHAPRHQDPATTATTASNPAAPV) is disordered. The span at 330 to 343 (PATTATTASNPAAP) shows a compositional bias: low complexity.

The protein belongs to the DDI1 family.

It localises to the cytoplasm. Its activity is regulated as follows. Inhibited by pepstatin, diazoacetyl-DL-norleucine methyl ester (DAN) and nelfinavir. Inhibited by the proteinase inhibitors lopinavir and ritonavir. In terms of biological role, aspartic protease. The protein is Protein DDI1 homolog of Leishmania major.